We begin with the raw amino-acid sequence, 95 residues long: Large ribosomal subunit protein bL25 (95 aa).

It belongs to the bacterial ribosomal protein bL25 family. In terms of assembly, part of the 50S ribosomal subunit; part of the 5S rRNA/L5/L18/L25 subcomplex. Contacts the 5S rRNA. Binds to the 5S rRNA independently of L5 and L18.

This is one of the proteins that binds to the 5S RNA in the ribosome where it forms part of the central protuberance. In Shewanella putrefaciens (strain CN-32 / ATCC BAA-453), this protein is Large ribosomal subunit protein bL25.